The primary structure comprises 641 residues: WW domain-binding protein 11 (641 aa).

The span at 1–11 (MGRRSTSSTKS) shows a compositional bias: polar residues. Residues 1-37 (MGRRSTSSTKSGKFMNPTDQARKEARKRELKKNKKQR) are disordered. The tract at residues 1-45 (MGRRSTSSTKSGKFMNPTDQARKEARKRELKKNKKQRMMVRAAVL) is required for nuclear import. N6-acetyllysine is present on Lys13. The span at 28–37 (RELKKNKKQR) shows a compositional bias: basic residues. Residues 75 to 133 (EKVLKDKRKKLRETFERILRLYEKENPDIYKELRKLEVEYEQKRAQLSQYFDAVKNAQH) are a coiled coil. Ser181 bears the Phosphoserine mark. Residues 186–213 (LGHGVPRLPPGRKPPGPPPGPPPPQVVQ) are disordered. Arg192 carries the omega-N-methylarginine modification. A compositionally biased stretch (pro residues) spans 192 to 210 (RLPPGRKPPGPPPGPPPPQ). Positions 217-221 (RKVGF) are interaction with PP1. Position 236 is a phosphotyrosine (Tyr236). A disordered region spans residues 236 to 552 (YSPELAQRGH…RPKADDTSAA (317 aa)). Ser237 carries the post-translational modification Phosphoserine. The segment covering 253–263 (SEDDGYPEDMD) has biased composition (acidic residues). Residues 276–304 (TDKSDGESDGDEFVHRDNGERDNNEEKKS) show a composition bias toward basic and acidic residues. Phosphoserine occurs at positions 279 and 283. The segment at 306 to 310 (LSVRF) is interaction with PP1. Positions 351-365 (EFSEDDDEDDSDDSE) are enriched in acidic residues. Phosphoserine occurs at positions 353, 361, and 364. Residues 366–380 (AEKQSQKQHKEESHS) are compositionally biased toward basic and acidic residues. Low complexity predominate over residues 386–404 (ASSQQQAPPQSVPPSQIQA). Composition is skewed to pro residues over residues 405–447 (PPMP…PPGM), 456–504 (RLLP…PPRP), and 510–530 (PLVP…PLPN). The PGR motif lies at 455 to 466 (PRLLPPGPPPGR). Residue Lys557 forms a Glycyl lysine isopeptide (Lys-Gly) (interchain with G-Cter in SUMO2) linkage. N6-acetyllysine is present on Lys565. Residue Lys572 forms a Glycyl lysine isopeptide (Lys-Gly) (interchain with G-Cter in SUMO2) linkage. Residues 587 to 623 (RENKGATAAPQRKSEDDSAVPLAKAAPKSGPSVPVSV) form a disordered region. Ser600 bears the Phosphoserine mark.

Interacts with PPP1CA, PPP1CB and PPP1CC. Interacts via the PGR motif with PQBP1 in the nucleus. Interacts with the WW domains of WBP4. In terms of tissue distribution, ubiquitous. Highly expressed in the heart, pancreas, kidney skeletal muscle, placenta and brain (at protein level). Weakly expressed in liver and lung.

It is found in the nucleus. The protein resides in the cytoplasm. Its function is as follows. Activates pre-mRNA splicing. May inhibit PP1 phosphatase activity. The polypeptide is WW domain-binding protein 11 (Homo sapiens (Human)).